Reading from the N-terminus, the 492-residue chain is Cobyric acid synthase (492 aa).

The GATase cobBQ-type domain maps to 253–441 (VLKVIAPVYP…LHGLFDTPQA (189 aa)). The active-site Nucleophile is the cysteine 334. The active site involves histidine 433.

This sequence belongs to the CobB/CobQ family. CobQ subfamily.

The protein operates within cofactor biosynthesis; adenosylcobalamin biosynthesis. Its function is as follows. Catalyzes amidations at positions B, D, E, and G on adenosylcobyrinic A,C-diamide. NH(2) groups are provided by glutamine, and one molecule of ATP is hydrogenolyzed for each amidation. This chain is Cobyric acid synthase, found in Azoarcus sp. (strain BH72).